The chain runs to 233 residues: Probable septum site-determining protein MinC (233 aa).

The disordered stretch occupies residues 104–124; the sequence is QKMATPEPAPAPAPVVDPNAP.

This sequence belongs to the MinC family. Interacts with MinD and FtsZ.

Its function is as follows. Cell division inhibitor that blocks the formation of polar Z ring septums. Rapidly oscillates between the poles of the cell to destabilize FtsZ filaments that have formed before they mature into polar Z rings. Prevents FtsZ polymerization. In Serratia proteamaculans (strain 568), this protein is Probable septum site-determining protein MinC.